A 737-amino-acid chain; its full sequence is ATP-dependent RNA helicase SUV3, mitochondrial (737 aa).

Residues 1–25 constitute a mitochondrion transit peptide; the sequence is MALVKYSTVFFPLRSLRLFVSIKKA. The region spanning 226-365 is the Helicase ATP-binding domain; the sequence is EARKIRRHII…KSVLPLVKSI (140 aa). 239–246 lines the ATP pocket; it reads GPTNSGKT. Residues 390–546 form the Helicase C-terminal domain; the sequence is PIKDGIKGLR…YLKTAVTWPT (157 aa).

Belongs to the helicase family. MSU1 and SUV3 are the two components of the mitochondrial degradosome (mtEXO).

It is found in the mitochondrion matrix. The catalysed reaction is ATP + H2O = ADP + phosphate + H(+). Functionally, required for intron-independent turnover and processing of mitochondrial RNA. It is a key control element in nuclear-mitochondrial interactions. This chain is ATP-dependent RNA helicase SUV3, mitochondrial (SUV3), found in Saccharomyces cerevisiae (strain ATCC 204508 / S288c) (Baker's yeast).